Consider the following 347-residue polypeptide: Palmitoyltransferase ZDHHC11 (347 aa).

Topologically, residues 1 to 46 are cytoplasmic; it reads MKEMNICGINKNWVLPEAQENNVKKFLPRPLSRVNGWSPPLHSFQA. The helical transmembrane segment at 47-67 threads the bilayer; it reads ISWITYLAMSIVTFGIFIPFL. Over 68–75 the chain is Lumenal; that stretch reads PYSWKYAA. Residues 76-96 traverse the membrane as a helical segment; it reads NIVMGGVFIFHLIVHLIAITI. The Cytoplasmic portion of the chain corresponds to 97 to 170; that stretch reads DPADTNVRLK…LNNCVGRRNY (74 aa). The DHHC domain maps to 128 to 178; sequence QYCHLCEVTASKKAKHCSACNKCVSGFDHHCKWLNNCVGRRNYWFFFWSVA. Residue cysteine 158 is the S-palmitoyl cysteine intermediate of the active site. A helical transmembrane segment spans residues 171–191; the sequence is WFFFWSVASAAVGILGVMIIL. Residues 192 to 234 lie on the Lumenal side of the membrane; that stretch reads CYICIQYFVNPDELRTDPLYKEIISENTWLLFLSLWPVPVKTP. A helical membrane pass occupies residues 235-255; it reads IVLSIAVMALLLAIASFVMLG. Residues 256 to 347 are Cytoplasmic-facing; sequence HLLIFHLYLI…SPPKICHSED (92 aa). The span at 291–306 shows a compositional bias: basic and acidic residues; it reads ELPLQKKGDLPQEKSD. Residues 291–332 form a disordered region; it reads ELPLQKKGDLPQEKSDNWAWPKSPPRVGSQKFPVSTLSPKSS. The segment covering 322–331 has biased composition (polar residues); that stretch reads FPVSTLSPKS.

The protein belongs to the DHHC palmitoyltransferase family. In terms of assembly, interacts with IRF3 and STING1; in presence of DNA viruses recruits IRF3 to STING1 promoting IRF3 phosphorylation and activation.

The protein resides in the endosome membrane. The enzyme catalyses L-cysteinyl-[protein] + hexadecanoyl-CoA = S-hexadecanoyl-L-cysteinyl-[protein] + CoA. Endoplasmic reticulum-localized palmitoyltransferase that could catalyze the addition of palmitate onto various protein substrates and be involved in a variety of cellular processes. Has a palmitoyltransferase activity toward NCDN and regulates NCDN association with endosome membranes through this palmitoylation. May play a role in cell proliferation. Functionally, also has a palmitoyltransferase activity-independent function in DNA virus-triggered and CGAS-mediated innate immune response. Functions as an adapter that recruits IRF3 to STING1 to promote the activation of that key transcriptional regulator of type I interferon (IFN)-dependent immune response. The chain is Palmitoyltransferase ZDHHC11 from Mus musculus (Mouse).